Reading from the N-terminus, the 195-residue chain is Interferon tau (195 aa).

A signal peptide spans 1–23; sequence MAFVLSLRMALVLVSYCPGGSLG. Intrachain disulfides connect cysteine 24/cysteine 122 and cysteine 52/cysteine 162. Residue asparagine 101 is glycosylated (N-linked (GlcNAc...) asparagine).

This sequence belongs to the alpha/beta interferon family. IFN-alphaII subfamily. Constitutively and exclusively expressed in the mononuclear cells of the extraembryonic trophectoderm.

The protein resides in the secreted. In terms of biological role, paracrine hormone primarily responsible for maternal recognition of pregnancy. Interacts with endometrial receptors, probably type I interferon receptors, and blocks estrogen receptor expression, preventing the estrogen-induced increase in oxytocin receptor expression in the endometrium. This results in the suppression of the pulsatile endometrial release of the luteolytic hormone prostaglandin F2-alpha, hindering the regression of the corpus luteum (luteolysis) and therefore a return to ovarian cyclicity. This, and a possible direct effect of IFN-tau on prostaglandin synthesis, leads in turn to continued ovarian progesterone secretion, which stimulates the secretion by the endometrium of the nutrients required for the growth of the conceptus. In summary, displays particularly high antiviral and antiproliferative potency concurrently with particular weak cytotoxicity, high antiluteolytic activity and immunomodulatory properties. In contrast with other IFNs, IFN-tau is not virally inducible. The protein is Interferon tau (IFNT) of Ovibos moschatus (Muskox).